A 345-amino-acid polypeptide reads, in one-letter code: Centromere protein L (345 aa).

Phosphoserine occurs at positions 40 and 54.

It belongs to the CENP-L/IML3 family. As to quaternary structure, component of the CENPA-CAD complex, composed of CENPI, CENPK, CENPL, CENPO, CENPP, CENPQ, CENPR and CENPS. The CENPA-CAD complex interacts with the CENPA-NAC complex, at least composed of CENPA, CENPC, CENPH, CENPM, CENPN, CENPT and CENPU.

It is found in the nucleus. The protein localises to the chromosome. Its subcellular location is the centromere. Component of the CENPA-CAD (nucleosome distal) complex, a complex recruited to centromeres which is involved in assembly of kinetochore proteins, mitotic progression and chromosome segregation. May be involved in incorporation of newly synthesized CENPA into centromeres via its interaction with the CENPA-NAC complex. The sequence is that of Centromere protein L (Cenpl) from Rattus norvegicus (Rat).